A 112-amino-acid polypeptide reads, in one-letter code: T cell receptor alpha variable 2 (112 aa).

An N-terminal signal peptide occupies residues 1 to 25; sequence MALQSTLGAVWLGLLLNSLWKVAES. The 87-residue stretch at 26–112 folds into the Ig-like domain; that stretch reads KDQVFQPSTV…DAAVYYCAVE (87 aa). Cysteines 47 and 109 form a disulfide. N-linked (GlcNAc...) asparagine glycans are attached at residues Asn48 and Asn84.

Alpha-beta TR is a heterodimer composed of an alpha and beta chain; disulfide-linked. The alpha-beta TR is associated with the transmembrane signaling CD3 coreceptor proteins to form the TR-CD3 (TcR or TCR). The assembly of alpha-beta TR heterodimers with CD3 occurs in the endoplasmic reticulum where a single alpha-beta TR heterodimer associates with one CD3D-CD3E heterodimer, one CD3G-CD3E heterodimer and one CD247 homodimer forming a stable octameric structure. CD3D-CD3E and CD3G-CD3E heterodimers preferentially associate with TR alpha and TR beta chains, respectively. The association of the CD247 homodimer is the last step of TcR assembly in the endoplasmic reticulum and is required for transport to the cell surface.

It is found in the cell membrane. Functionally, v region of the variable domain of T cell receptor (TR) alpha chain that participates in the antigen recognition. Alpha-beta T cell receptors are antigen specific receptors which are essential to the immune response and are present on the cell surface of T lymphocytes. Recognize peptide-major histocompatibility (MH) (pMH) complexes that are displayed by antigen presenting cells (APC), a prerequisite for efficient T cell adaptive immunity against pathogens. Binding of alpha-beta TR to pMH complex initiates TR-CD3 clustering on the cell surface and intracellular activation of LCK that phosphorylates the ITAM motifs of CD3G, CD3D, CD3E and CD247 enabling the recruitment of ZAP70. In turn ZAP70 phosphorylates LAT, which recruits numerous signaling molecules to form the LAT signalosome. The LAT signalosome propagates signal branching to three major signaling pathways, the calcium, the mitogen-activated protein kinase (MAPK) kinase and the nuclear factor NF-kappa-B (NF-kB) pathways, leading to the mobilization of transcription factors that are critical for gene expression and essential for T cell growth and differentiation. The T cell repertoire is generated in the thymus, by V-(D)-J rearrangement. This repertoire is then shaped by intrathymic selection events to generate a peripheral T cell pool of self-MH restricted, non-autoaggressive T cells. Post-thymic interaction of alpha-beta TR with the pMH complexes shapes TR structural and functional avidity. In Homo sapiens (Human), this protein is T cell receptor alpha variable 2.